A 446-amino-acid polypeptide reads, in one-letter code: MDELPPELWIKILSRINDSESLARCRVASKTLNSLSREVRAVNLICTWSRYLKSRSIVVVTPFKTIFRSLIENSSKIRSISVGVDKALKGMSFDDFNEEDSKDLYLTDVEFVKEWLPRVREDLENLSISDFWIQSCWRKSDILALISSNCSKLVKLEVKNAWLSVVGLTEMPNLRYLTLEFIRLDDENLEKVNDCFPFLQELNLIGVGGLKEPRIHFLHLKSCHWTVSNAPLSLAIVAPNLLELKLKCNKPKSLLVETPKLVQCHLSVEDAEGVSFGEFQDLKTLELVSPDMYRLISNISFGNKIKKLAVDSVKSIEQSERLELGLATILKAFPGITSLSLSPRTWSDIETHFQSQGGLGDMKGTDSLKQITARVQMSDHTNVHQTVSFIRSIVNKYRGLTDMRLMIHQDKDPRVRSNLISTCMMSNPRVRWKWGMWAEGGEDMWV.

The region spanning methionine 1–tyrosine 51 is the F-box domain. 8 LRR repeats span residues valine 59–valine 84, aspartate 103–aspartate 130, serine 135–asparagine 160, phenylalanine 181–glycine 206, cysteine 223–cysteine 248, histidine 265–serine 289, glutamine 318–proline 343, and asparagine 382–isoleucine 407.

The chain is F-box/LRR-repeat protein At4g29420 from Arabidopsis thaliana (Mouse-ear cress).